We begin with the raw amino-acid sequence, 177 residues long: Parathyroid hormone-related protein (177 aa).

Positions 1-24 are cleaved as a signal peptide; the sequence is MLRRLVQQWSVAVFLLSYSVPSCG. Positions 25-34 are excised as a propeptide; sequence RSVEGPGRRL. The tract at residues 57–68 is important for receptor binding; the sequence is RFFLHHLIAEIH. A disordered region spans residues 74–177; the sequence is ATSEVSPNSK…PEPELDSRRH (104 aa). Residues 76-90 show a composition bias toward polar residues; the sequence is SEVSPNSKPAANTKN. A Nuclear localization signal motif is present at residues 108 to 129; sequence TNKVEPYKEQPLKTPGKKKKGK. The span at 109 to 118 shows a compositional bias: basic and acidic residues; it reads NKVEPYKEQP. The span at 122–132 shows a compositional bias: basic residues; sequence PGKKKKGKPGK.

Belongs to the parathyroid hormone family. In terms of assembly, PTHrP interacts with PTH1R (via N-terminal extracellular domain). In terms of processing, there are several secretory forms, including osteostatin, arising from endoproteolytic cleavage of the initial translation product. Each of these secretory forms is believed to have one or more of its own receptors that mediates the normal paracrine, autocrine and endocrine actions.

It is found in the secreted. Its subcellular location is the cytoplasm. The protein resides in the nucleus. Functionally, neuroendocrine peptide which is a critical regulator of cellular and organ growth, development, migration, differentiation and survival and of epithelial calcium ion transport. Acts by binding to its receptor, PTH1R, activating G protein-coupled receptor signaling. Regulates endochondral bone development and epithelial-mesenchymal interactions during the formation of the mammary glands and teeth. Required for skeletal homeostasis. Promotes mammary mesenchyme differentiation and bud outgrowth by modulating mesenchymal cell responsiveness to BMPs. Up-regulates BMPR1A expression in the mammary mesenchyme and this increases the sensitivity of these cells to BMPs and allows them to respond to BMP4 in a paracrine and/or autocrine fashion. BMP4 signaling in the mesenchyme, in turn, triggers epithelial outgrowth and augments MSX2 expression, which causes the mammary mesenchyme to inhibit hair follicle formation within the nipple sheath. Its function is as follows. Potent inhibitor of osteoclastic bone resorption. In Oryctolagus cuniculus (Rabbit), this protein is Parathyroid hormone-related protein (PTHLH).